A 314-amino-acid chain; its full sequence is 4-hydroxy-3-methylbut-2-enyl diphosphate reductase (314 aa).

[4Fe-4S] cluster is bound at residue Cys12. (2E)-4-hydroxy-3-methylbut-2-enyl diphosphate contacts are provided by His41 and His74. 2 residues coordinate dimethylallyl diphosphate: His41 and His74. The isopentenyl diphosphate site is built by His41 and His74. Cys96 serves as a coordination point for [4Fe-4S] cluster. A (2E)-4-hydroxy-3-methylbut-2-enyl diphosphate-binding site is contributed by His124. His124 is a dimethylallyl diphosphate binding site. His124 is a binding site for isopentenyl diphosphate. Glu126 serves as the catalytic Proton donor. Thr168 lines the (2E)-4-hydroxy-3-methylbut-2-enyl diphosphate pocket. Residue Cys198 participates in [4Fe-4S] cluster binding. 4 residues coordinate (2E)-4-hydroxy-3-methylbut-2-enyl diphosphate: Ser226, Ser227, Asn228, and Ser270. The dimethylallyl diphosphate site is built by Ser226, Ser227, Asn228, and Ser270. Isopentenyl diphosphate is bound by residues Ser226, Ser227, Asn228, and Ser270.

Belongs to the IspH family. [4Fe-4S] cluster serves as cofactor.

The enzyme catalyses isopentenyl diphosphate + 2 oxidized [2Fe-2S]-[ferredoxin] + H2O = (2E)-4-hydroxy-3-methylbut-2-enyl diphosphate + 2 reduced [2Fe-2S]-[ferredoxin] + 2 H(+). It carries out the reaction dimethylallyl diphosphate + 2 oxidized [2Fe-2S]-[ferredoxin] + H2O = (2E)-4-hydroxy-3-methylbut-2-enyl diphosphate + 2 reduced [2Fe-2S]-[ferredoxin] + 2 H(+). It participates in isoprenoid biosynthesis; dimethylallyl diphosphate biosynthesis; dimethylallyl diphosphate from (2E)-4-hydroxy-3-methylbutenyl diphosphate: step 1/1. Its pathway is isoprenoid biosynthesis; isopentenyl diphosphate biosynthesis via DXP pathway; isopentenyl diphosphate from 1-deoxy-D-xylulose 5-phosphate: step 6/6. Functionally, catalyzes the conversion of 1-hydroxy-2-methyl-2-(E)-butenyl 4-diphosphate (HMBPP) into a mixture of isopentenyl diphosphate (IPP) and dimethylallyl diphosphate (DMAPP). Acts in the terminal step of the DOXP/MEP pathway for isoprenoid precursor biosynthesis. In Pseudomonas aeruginosa (strain ATCC 15692 / DSM 22644 / CIP 104116 / JCM 14847 / LMG 12228 / 1C / PRS 101 / PAO1), this protein is 4-hydroxy-3-methylbut-2-enyl diphosphate reductase.